We begin with the raw amino-acid sequence, 400 residues long: Sensory histidine kinase/phosphatase NtrB (400 aa).

Low complexity-rich tracts occupy residues 1-10 (MARASAAAPL) and 18-27 (RAPSSSYRPV). A disordered region spans residues 1 to 27 (MARASAAAPLPRRPARPRAPSSSYRPV). One can recognise a PAS domain in the interval 29–99 (PCIDPSVMLN…IEQVQQGRHR (71 aa)). Residues 163 to 381 (MLGHEVKNPL…VFKVSLPMFD (219 aa)) form the Histidine kinase domain. The residue at position 166 (H166) is a Phosphohistidine; by autocatalysis.

Post-translationally, autophosphorylated.

Its subcellular location is the cytoplasm. The catalysed reaction is ATP + protein L-histidine = ADP + protein N-phospho-L-histidine.. Functionally, member of the two-component regulatory system NtrB/NtrC, which controls expression of the nitrogen-regulated (ntr) genes in response to nitrogen limitation. Under conditions of nitrogen limitation, NtrB autophosphorylates and transfers the phosphoryl group to NtrC. In the presence of nitrogen, acts as a phosphatase that dephosphorylates and inactivates NtrC. The sequence is that of Sensory histidine kinase/phosphatase NtrB from Azospirillum brasilense.